The following is a 274-amino-acid chain: Dermonecrotic toxin SdSicTox-betaIIB1bvii (274 aa).

Histidine 5 is a catalytic residue. Positions 25 and 27 each coordinate Mg(2+). Histidine 41 acts as the Nucleophile in catalysis. 2 cysteine pairs are disulfide-bonded: cysteine 45–cysteine 51 and cysteine 47–cysteine 190. Aspartate 85 provides a ligand contact to Mg(2+).

The protein belongs to the arthropod phospholipase D family. Class II subfamily. Mg(2+) serves as cofactor. As to expression, expressed by the venom gland.

It is found in the secreted. It carries out the reaction an N-(acyl)-sphingosylphosphocholine = an N-(acyl)-sphingosyl-1,3-cyclic phosphate + choline. The enzyme catalyses an N-(acyl)-sphingosylphosphoethanolamine = an N-(acyl)-sphingosyl-1,3-cyclic phosphate + ethanolamine. It catalyses the reaction a 1-acyl-sn-glycero-3-phosphocholine = a 1-acyl-sn-glycero-2,3-cyclic phosphate + choline. The catalysed reaction is a 1-acyl-sn-glycero-3-phosphoethanolamine = a 1-acyl-sn-glycero-2,3-cyclic phosphate + ethanolamine. In terms of biological role, dermonecrotic toxins cleave the phosphodiester linkage between the phosphate and headgroup of certain phospholipids (sphingolipid and lysolipid substrates), forming an alcohol (often choline) and a cyclic phosphate. This toxin acts on sphingomyelin (SM). It may also act on ceramide phosphoethanolamine (CPE), lysophosphatidylcholine (LPC) and lysophosphatidylethanolamine (LPE), but not on lysophosphatidylserine (LPS), and lysophosphatidylglycerol (LPG). It acts by transphosphatidylation, releasing exclusively cyclic phosphate products as second products. Induces dermonecrosis, hemolysis, increased vascular permeability, edema, inflammatory response, and platelet aggregation. The sequence is that of Dermonecrotic toxin SdSicTox-betaIIB1bvii from Sicarius cf. damarensis (strain GJB-2008) (Six-eyed sand spider).